The chain runs to 156 residues: TPAGRLKCELFSDIVPRTSENFRQLCTGEFRPNHVPEGYKNSIFHRIIKDFMCQGGDFINADGTGSRSIYGDKFDDENFTLKHDKAGLLSMANSGPGTNGCQFFITAQPCPFLDGKHVVFGKVVDGLLTLRKMENVPTGANNRPKMAVRITQCGEM.

The 155-residue stretch at 1–155 (TPAGRLKCEL…MAVRITQCGE (155 aa)) folds into the PPIase cyclophilin-type domain.

Belongs to the cyclophilin-type PPIase family. PPIase H subfamily.

The protein resides in the nucleus. The enzyme catalyses [protein]-peptidylproline (omega=180) = [protein]-peptidylproline (omega=0). Its function is as follows. PPIases accelerate the folding of proteins. It catalyzes the cis-trans isomerization of proline imidic peptide bonds in oligopeptides. The polypeptide is Peptidyl-prolyl cis-trans isomerase H (CYP3) (Mycosarcoma maydis (Corn smut fungus)).